We begin with the raw amino-acid sequence, 78 residues long: Beta-defensin 12 (78 aa).

Positions 1 to 27 (MALSRGTFYFGLALFFIVVELPSGSWA) are cleaved as a signal peptide. 3 disulfides stabilise this stretch: Cys46/Cys73, Cys53/Cys67, and Cys57/Cys74.

Belongs to the beta-defensin family.

The protein localises to the secreted. In terms of biological role, has antibacterial activity. The protein is Beta-defensin 12 (Defb12) of Rattus norvegicus (Rat).